We begin with the raw amino-acid sequence, 126 residues long: UPF0212 protein TON_0350 (126 aa).

Belongs to the UPF0212 family.

This is UPF0212 protein TON_0350 from Thermococcus onnurineus (strain NA1).